The chain runs to 489 residues: Acetyl-coenzyme A carboxylase carboxyl transferase subunit beta, chloroplastic (489 aa).

The CoA carboxyltransferase N-terminal domain occupies 225 to 489; sequence LWIQCDNCYG…FFPLNKTEIK (265 aa). 4 residues coordinate Zn(2+): cysteine 229, cysteine 232, cysteine 245, and cysteine 248. The C4-type zinc-finger motif lies at 229–248; the sequence is CDNCYGLMYKKVEMNVCEEC.

Belongs to the AccD/PCCB family. In terms of assembly, acetyl-CoA carboxylase is a heterohexamer composed of biotin carboxyl carrier protein, biotin carboxylase and 2 subunits each of ACCase subunit alpha and ACCase plastid-coded subunit beta (accD). Requires Zn(2+) as cofactor.

The protein resides in the plastid. It localises to the chloroplast stroma. The enzyme catalyses N(6)-carboxybiotinyl-L-lysyl-[protein] + acetyl-CoA = N(6)-biotinyl-L-lysyl-[protein] + malonyl-CoA. Its pathway is lipid metabolism; malonyl-CoA biosynthesis; malonyl-CoA from acetyl-CoA: step 1/1. Component of the acetyl coenzyme A carboxylase (ACC) complex. Biotin carboxylase (BC) catalyzes the carboxylation of biotin on its carrier protein (BCCP) and then the CO(2) group is transferred by the transcarboxylase to acetyl-CoA to form malonyl-CoA. This is Acetyl-coenzyme A carboxylase carboxyl transferase subunit beta, chloroplastic from Draba nemorosa (Woodland whitlowgrass).